Consider the following 531-residue polypeptide: Beta-hexosaminidase subunit beta (531 aa).

The first 21 residues, 1 to 21, serve as a signal peptide directing secretion; that stretch reads MEVLPGLLRLLAALVVAERWA. The cysteines at positions 67 and 111 are disulfide-linked. N-linked (GlcNAc...) asparagine glycans are attached at residues asparagine 120, asparagine 164, and asparagine 301. Intrachain disulfides connect cysteine 283-cysteine 334 and cysteine 508-cysteine 525. Glutamate 329 (proton donor) is an active-site residue.

This sequence belongs to the glycosyl hydrolase 20 family. In terms of assembly, there are 3 forms of beta-hexosaminidase: hexosaminidase A is a heterodimer composed of one subunit alpha and one subunit beta (chain A and B); hexosaminidase B is a homodimer of two beta subunits (two chains A and B); hexosaminidase S is a homodimer of two alpha subunits. The composition of the dimer (isozyme A versus isozyme S) has a significant effect on the substrate specificity of the alpha subunit active site.

The protein localises to the lysosome. The protein resides in the cytoplasmic vesicle. Its subcellular location is the secretory vesicle. It is found in the cortical granule. It carries out the reaction Hydrolysis of terminal non-reducing N-acetyl-D-hexosamine residues in N-acetyl-beta-D-hexosaminides.. It catalyses the reaction N-acetyl-beta-D-galactosaminyl-(1-&gt;4)-beta-D-3-sulfogalactosyl-(1-&gt;4)-beta-D-glucosyl-(1&lt;-&gt;1')-ceramide + H2O = a beta-D-3-sulfogalactosyl-(1-&gt;4)-beta-D-glucosyl-(1&lt;-&gt;1')-ceramide + N-acetyl-beta-D-galactosamine. The enzyme catalyses a ganglioside GM2 (d18:1(4E)) + H2O = a ganglioside GM3 (d18:1(4E)) + N-acetyl-beta-D-galactosamine. The catalysed reaction is a ganglioside GM2 + H2O = a ganglioside GM3 + N-acetyl-beta-D-galactosamine. It carries out the reaction beta-D-GalNAc-(1-&gt;4)-alpha-L-IdoA-(1-&gt;3)-beta-D-GalNAc-4-sulfate-(1-&gt;4)-alpha-L-IdoA-(1-&gt;3)-D-GalNAc-4-sulfate + H2O = alpha-L-IdoA-(1-&gt;3)-beta-D-GalNAc-4-sulfate-(1-&gt;4)-alpha-L-IdoA-(1-&gt;3)-D-GalNAc-4-sulfate + N-acetyl-D-galactosamine. It catalyses the reaction N-acetyl-beta-D-6-sulfogalactosaminyl-(1-&gt;4)-alpha-L-iduronyl-(1-&gt;3)-N-acetyl-D-6-sulfogalactosamine + H2O = alpha-L-iduronyl-(1-&gt;3)-N-acetyl-D-6-sulfogalactosamine + N-acetyl-D-6-sulfogalactosamine. Its activity is regulated as follows. Addition of GM2A stimulates the hydrolysis of sulfated glycosphingolipid SM2 and the ganglioside GM2. Hydrolyzes the non-reducing end N-acetyl-D-hexosamine and/or sulfated N-acetyl-D-hexosamine of glycoconjugates, such as the oligosaccharide moieties from proteins and neutral glycolipids, or from certain mucopolysaccharides. The isozyme B does not hydrolyze each of these substrates, however hydrolyzes efficiently neutral oligosaccharide. Only the isozyme A is responsible for the degradation of GM2 gangliosides in the presence of GM2A. During fertilization is responsible, at least in part, for the zona block to polyspermy. Present in the cortical granules of non-activated oocytes, is exocytosed during the cortical reaction in response to oocyte activation and inactivates the sperm galactosyltransferase-binding site, accounting for the block in sperm binding to the zona pellucida. The polypeptide is Beta-hexosaminidase subunit beta (Sus scrofa (Pig)).